The chain runs to 334 residues: MGGVTLEKIRIGIVGYGNLGKGAELGIRQNKDMELVGIFTRRNPNSIKPLTEGVKVYSVDSARDMADKIDVMLLCSGSRTDLPVQGPEFAAMFNIVDGFDTHNKIQEYFESVDAKAKESKKVAVIACGWDPGMFSLNRLFGEVILPEGKTYTFWGKGVSQGHSDAIRRVKGVVDAKQYTIPVESAIELVRKGENPELTTRQKHIRECFVVVEEGADKERIEREIKTMPDYFADYDTIVHFISLEELKEKHSGIPHGGFSIRTGRTGINNENKHTIEYSLKLDSNPDFTANTLLAYARAAYRLNKEGVFGAKTVFDIPPAYLSPKSAEELRRSLL.

Residues 16-19 (YGNL), 40-42 (TRR), 75-78 (CSGS), 98-100 (GFD), and 127-131 (CGWDP) each bind NADP(+). Substrate contacts are provided by residues Asp100, Asp130, Trp154, 160–161 (QG), Thr179, Arg205, His255, and Asn284.

Belongs to the diaminopimelate dehydrogenase family. In terms of assembly, homodimer.

It catalyses the reaction meso-2,6-diaminopimelate + NADP(+) + H2O = (S)-2-amino-6-oxoheptanedioate + NH4(+) + NADPH + H(+). It participates in amino-acid biosynthesis; L-lysine biosynthesis via DAP pathway; DL-2,6-diaminopimelate from (S)-tetrahydrodipicolinate: step 1/1. In terms of biological role, catalyzes the reversible NADPH-dependent reductive amination of L-2-amino-6-oxopimelate, the acyclic form of L-tetrahydrodipicolinate, to generate the meso compound, D,L-2,6-diaminopimelate. Probably plays a role in lysine biosynthesis. Exhibits a high substrate specificity for meso-2,6-diaminopimelate (m-DAP), since the activity with L,L-2,6-diaminopimelate is less than 5% of the activity observed with m-DAP. Can use NAD(+) only very poorly since the activity observed in the presence of NAD(+) is about 0.3% of that with NADP(+). The polypeptide is Meso-diaminopimelate D-dehydrogenase (ddh) (Acetivibrio thermocellus (strain ATCC 27405 / DSM 1237 / JCM 9322 / NBRC 103400 / NCIMB 10682 / NRRL B-4536 / VPI 7372) (Clostridium thermocellum)).